A 138-amino-acid polypeptide reads, in one-letter code: Small ribosomal subunit protein uS8 (138 aa).

Belongs to the universal ribosomal protein uS8 family. In terms of assembly, part of the 30S ribosomal subunit. Contacts proteins S5 and S12.

In terms of biological role, one of the primary rRNA binding proteins, it binds directly to 16S rRNA central domain where it helps coordinate assembly of the platform of the 30S subunit. In Thermus aquaticus, this protein is Small ribosomal subunit protein uS8.